Reading from the N-terminus, the 88-residue chain is Class II hydrophobin 5 (88 aa).

The signal sequence occupies residues 1 to 14 (MQFLVLALASLAAA). 4 cysteine pairs are disulfide-bonded: C27/C73, C35/C64, C36/C48, and C74/C85.

The protein belongs to the cerato-ulmin hydrophobin family. In terms of assembly, homotetramer. Further self-assembles to form highly ordered films at water-air interfaces through intermolecular interactions. As to expression, only appears on young aerial hyphae. HCf-5 is the most abundant transcript in sporulating mycelium.

The protein resides in the secreted. Its subcellular location is the cell wall. In terms of biological role, aerial growth, conidiation, and dispersal of filamentous fungi in the environment rely upon a capability of their secreting small amphipathic proteins called hydrophobins (HPBs) with low sequence identity. Class I can self-assemble into an outermost layer of rodlet bundles on aerial cell surfaces, conferring cellular hydrophobicity that supports fungal growth, development and dispersal; whereas Class II form highly ordered films at water-air interfaces through intermolecular interactions but contribute nothing to the rodlet structure. In Passalora fulva (Tomato leaf mold), this protein is Class II hydrophobin 5.